Reading from the N-terminus, the 116-residue chain is NADH-ubiquinone oxidoreductase chain 3 (116 aa).

Transmembrane regions (helical) follow at residues 3 to 23 (LITT…TISF), 56 to 76 (FFLI…LLPL), and 87 to 107 (LTLI…IYEW).

Belongs to the complex I subunit 3 family.

The protein localises to the mitochondrion membrane. It carries out the reaction a ubiquinone + NADH + 5 H(+)(in) = a ubiquinol + NAD(+) + 4 H(+)(out). Its function is as follows. Core subunit of the mitochondrial membrane respiratory chain NADH dehydrogenase (Complex I) that is believed to belong to the minimal assembly required for catalysis. Complex I functions in the transfer of electrons from NADH to the respiratory chain. The immediate electron acceptor for the enzyme is believed to be ubiquinone. The chain is NADH-ubiquinone oxidoreductase chain 3 (MT-ND3) from Oncorhynchus keta (Chum salmon).